The chain runs to 461 residues: MSHITTEDPATLRLPFKEKLSYGIGDLASNILLDIGTLYLLKFYTDVLGLPGTYGGIIFLISKFFTAFTDMGTGIMLDSRRKIGPKGKFRPFILYASFPVTLLAIANFVGTPFDVTGKTVMATILFMLYGLFFSMMNCSYGAMVPAITKNPNERASLAAWRQGGATLGLLLCTVGFVPVMNLIEGNQQLGYIFAATLFSLFGLLFMWICYSGVKERYVETQPANPAQKPGLLQSFRAIAGNRPLFILCIANLCTLGAFNVKLAIQVYYTQYVLNDPILLSYMGFFSMGCIFIGVFLMPASVRRFGKKKVYIGGLLIWVLGDLLNYFFGGGSVSFVAFSCLAFFGSAFVNSLNWALVSDTVEYGEWRTGVRSEGTVYTGFTFFRKVSQALAGFFPGWMLTQIGYVPNVAQADHTIEGLRQLIFIYPSALAVVTIVAMGCFYSLNEKMYVRIVEEIEARKRTA.

Residues 1–20 lie on the Cytoplasmic side of the membrane; it reads MSHITTEDPATLRLPFKEKL. A helical membrane pass occupies residues 21–41; sequence SYGIGDLASNILLDIGTLYLL. The Periplasmic portion of the chain corresponds to 42-47; sequence KFYTDV. A helical membrane pass occupies residues 48–68; the sequence is LGLPGTYGGIIFLISKFFTAF. Residues 69-92 are Cytoplasmic-facing; the sequence is TDMGTGIMLDSRRKIGPKGKFRPF. A helical membrane pass occupies residues 93 to 113; it reads ILYASFPVTLLAIANFVGTPF. Residues 114–123 lie on the Periplasmic side of the membrane; that stretch reads DVTGKTVMAT. The chain crosses the membrane as a helical span at residues 124-144; the sequence is ILFMLYGLFFSMMNCSYGAMV. The Cytoplasmic portion of the chain corresponds to 145–162; it reads PAITKNPNERASLAAWRQ. A helical membrane pass occupies residues 163–183; sequence GGATLGLLLCTVGFVPVMNLI. The Periplasmic portion of the chain corresponds to 184 to 188; the sequence is EGNQQ. The helical transmembrane segment at 189 to 209 threads the bilayer; it reads LGYIFAATLFSLFGLLFMWIC. The Cytoplasmic portion of the chain corresponds to 210 to 243; it reads YSGVKERYVETQPANPAQKPGLLQSFRAIAGNRP. Residues 244–264 traverse the membrane as a helical segment; that stretch reads LFILCIANLCTLGAFNVKLAI. Residues 265–276 lie on the Periplasmic side of the membrane; sequence QVYYTQYVLNDP. Residues 277 to 297 form a helical membrane-spanning segment; that stretch reads ILLSYMGFFSMGCIFIGVFLM. The Cytoplasmic segment spans residues 298 to 308; the sequence is PASVRRFGKKK. Residues 309–329 form a helical membrane-spanning segment; it reads VYIGGLLIWVLGDLLNYFFGG. Position 330 (G330) is a topological domain, periplasmic. Residues 331–351 form a helical membrane-spanning segment; it reads SVSFVAFSCLAFFGSAFVNSL. Residues 352 to 387 are Cytoplasmic-facing; sequence NWALVSDTVEYGEWRTGVRSEGTVYTGFTFFRKVSQ. A helical membrane pass occupies residues 388-408; the sequence is ALAGFFPGWMLTQIGYVPNVA. Residues 409–419 lie on the Periplasmic side of the membrane; sequence QADHTIEGLRQ. Residues 420 to 440 form a helical membrane-spanning segment; sequence LIFIYPSALAVVTIVAMGCFY. Residues 441–461 lie on the Cytoplasmic side of the membrane; it reads SLNEKMYVRIVEEIEARKRTA.

This sequence belongs to the sodium:galactoside symporter (TC 2.A.2) family.

The protein resides in the cell inner membrane. In terms of biological role, could be involved in the export of 2,3-dihydroxypropane-1-sulfonate (DHPS). This Escherichia coli (strain K12) protein is Putative 2,3-dihydroxypropane-1-sulfonate exporter (yihP).